We begin with the raw amino-acid sequence, 155 residues long: Ribosome-binding factor A (155 aa).

Composition is skewed to basic and acidic residues over residues 116–125 (ARQRDQEVAR) and 142–155 (SPHE…ADGW). Residues 116–155 (ARQRDQEVARQAEGATPAGDANPYKTSPHEGRPESEADGW) are disordered.

This sequence belongs to the RbfA family. As to quaternary structure, monomer. Binds 30S ribosomal subunits, but not 50S ribosomal subunits or 70S ribosomes.

The protein localises to the cytoplasm. In terms of biological role, one of several proteins that assist in the late maturation steps of the functional core of the 30S ribosomal subunit. Associates with free 30S ribosomal subunits (but not with 30S subunits that are part of 70S ribosomes or polysomes). Required for efficient processing of 16S rRNA. May interact with the 5'-terminal helix region of 16S rRNA. In Corynebacterium kroppenstedtii (strain DSM 44385 / JCM 11950 / CIP 105744 / CCUG 35717), this protein is Ribosome-binding factor A.